Consider the following 408-residue polypeptide: MDRLNQLSGQLKPNAKQSILQKNPDDVVIVAAYRTAIGKGFKGSFRNVHSEFILTEFLKEFIKKTNIDPSLIEDVAIGNVLNQAAGATEHRGACLAAGIPYTAAFIAVNRFCSSGLMAISDIANKIKTGEIECGLAGGAESMSTNYRDPRVAPRIDPHLADDAQMEKCLIPMGITNENVANQFNISRERQDEFAAKSYNKAAKAVASGAFKSEILPIRSIIRNSDGTEKEIIVDTDEGPREGVTAESLGKLRPAFDGTTTAGNASQVSDGAAAVLLMKRSLAEAKGYPIIGKYVLCSTAGVPPEIMGVGPAFAIPEVLKRTGLTVDDIDVFEINEAFAAQCLYSAEQVNVPEEKLNINGGAIALGHPLGETGARQYATIIPLLKPGQIGLTSMCIGSGMGSASILVRE.

Cys112 functions as the Acyl-thioester intermediate in the catalytic mechanism. Catalysis depends on proton acceptor residues His366 and Cys394.

Belongs to the thiolase-like superfamily. Thiolase family. Homodimer.

Its subcellular location is the peroxisome. The catalysed reaction is an acyl-CoA + acetyl-CoA = a 3-oxoacyl-CoA + CoA. The protein operates within lipid metabolism; fatty acid metabolism. In Candida tropicalis (Yeast), this protein is 3-ketoacyl-CoA thiolase B, peroxisomal.